The chain runs to 201 residues: Small ribosomal subunit protein eS1 (201 aa).

Belongs to the eukaryotic ribosomal protein eS1 family.

The protein is Small ribosomal subunit protein eS1 of Methanoregula boonei (strain DSM 21154 / JCM 14090 / 6A8).